A 409-amino-acid chain; its full sequence is U-box domain-containing protein 28 (409 aa).

Residues 10–84 form the U-box domain; the sequence is TVPCFFKCPI…DHWSDSINRR (75 aa). ARM repeat units lie at residues 178-218, 219-261, and 263-304; these read RLSN…FIAV, DAES…AIAS, and KRVK…AISS.

The catalysed reaction is S-ubiquitinyl-[E2 ubiquitin-conjugating enzyme]-L-cysteine + [acceptor protein]-L-lysine = [E2 ubiquitin-conjugating enzyme]-L-cysteine + N(6)-ubiquitinyl-[acceptor protein]-L-lysine.. It participates in protein modification; protein ubiquitination. Functionally, functions as an E3 ubiquitin ligase. The chain is U-box domain-containing protein 28 (PUB28) from Arabidopsis thaliana (Mouse-ear cress).